The following is a 429-amino-acid chain: Zygotic gap protein knirps (429 aa).

The segment at residues 2–78 (NQTCKVCGEP…VGMSKGGSRY (77 aa)) is a DNA-binding region (nuclear receptor). 2 consecutive NR C4-type zinc fingers follow at residues 5–25 (CKVC…CEGC) and 42–66 (CKNE…LRKC). A compositionally biased stretch (low complexity) spans 112–126 (SVGGAPSASSPVGSP). 4 disordered regions span residues 112–148 (SVGG…QQQQ), 223–250 (QSVD…SSAR), 338–357 (TSRS…QEVE), and 375–397 (SSSS…AEVK). 2 stretches are compositionally biased toward polar residues: residues 225-237 (VDSV…FSPA) and 338-349 (TSRSSVHSFNDS). Residues 375–393 (SSSSSSHSAAHSPNTTTAH) show a composition bias toward low complexity.

This sequence belongs to the nuclear hormone receptor family. NR0 subfamily.

It is found in the nucleus. Its function is as follows. Transcriptional repressor. Binds to multiple sites in the eve stripe 3 enhancer element. Plays an essential role in the segmentation process both by refining the expression patterns of gap genes and by establishing pair-rules stripes of gene expression. The sequence is that of Zygotic gap protein knirps (kni) from Drosophila melanogaster (Fruit fly).